We begin with the raw amino-acid sequence, 282 residues long: Formate channel FocB (282 aa).

Residues 1–35 (MRNKLSFDLQLSARKAAIAERIAAHKIARSKVSVF) are Cytoplasmic-facing. Residues 36 to 56 (LMAMSAGVFMAIGFTFYLSVI) traverse the membrane as a helical segment. Residues 57–68 (ADAPSSQALTHL) are Periplasmic-facing. Residues 69-89 (VGGLCFTLGFILLAVCGTSLF) form a helical membrane-spanning segment. Over 90–112 (TSSVMTVMAKSRGVISWRTWLIN) the chain is Cytoplasmic. A helical transmembrane segment spans residues 113–133 (ALLVACGNLAGIACFSLLIWF). Residues 134–163 (SGLVMSENAMWGVAVLHCAEGKMHHTFTES) lie on the Periplasmic side of the membrane. A helical membrane pass occupies residues 164–184 (VSLGIMCNLMVCLALWMSYCG). Residues 185 to 190 (RSLCDK) lie on the Cytoplasmic side of the membrane. A helical membrane pass occupies residues 191 to 211 (IVAMILPITLFVASGFEHCIA). Residues 212-248 (NLFVIPFAIAIRHFAPPPFWQLAHSSADNFPALTVSH) lie on the Periplasmic side of the membrane. Residues 249–269 (FITANLLPVMLGNIIGGAVLV) traverse the membrane as a helical segment. Over 270–282 (SMCYRAIYLRQEP) the chain is Cytoplasmic.

The protein belongs to the FNT transporter (TC 1.A.16) family.

The protein resides in the cell inner membrane. The catalysed reaction is formate(in) = formate(out). With respect to regulation, the direction of formate translocation depends on external pH and electron donor source. Its function is as follows. Involved in the bidirectional transport of formate during mixed-acid fermentation. This is Formate channel FocB from Escherichia coli (strain K12).